A 595-amino-acid polypeptide reads, in one-letter code: Elongation factor 4 (595 aa).

One can recognise a tr-type G domain in the interval 2–183 (KNIRNFCIIA…TIVEKVPAPK (182 aa)). GTP contacts are provided by residues 14–19 (DHGKST) and 130–133 (NKID).

Belongs to the TRAFAC class translation factor GTPase superfamily. Classic translation factor GTPase family. LepA subfamily.

The protein resides in the cell inner membrane. The enzyme catalyses GTP + H2O = GDP + phosphate + H(+). Functionally, required for accurate and efficient protein synthesis under certain stress conditions. May act as a fidelity factor of the translation reaction, by catalyzing a one-codon backward translocation of tRNAs on improperly translocated ribosomes. Back-translocation proceeds from a post-translocation (POST) complex to a pre-translocation (PRE) complex, thus giving elongation factor G a second chance to translocate the tRNAs correctly. Binds to ribosomes in a GTP-dependent manner. In Parabacteroides distasonis (strain ATCC 8503 / DSM 20701 / CIP 104284 / JCM 5825 / NCTC 11152), this protein is Elongation factor 4.